The following is a 221-amino-acid chain: Small ribosomal subunit protein uS3 (221 aa).

The region spanning 39–108 (IRKFVKKELF…NILINIVEVK (70 aa)) is the KH type-2 domain.

This sequence belongs to the universal ribosomal protein uS3 family. As to quaternary structure, part of the 30S ribosomal subunit. Forms a tight complex with proteins S10 and S14.

Its function is as follows. Binds the lower part of the 30S subunit head. Binds mRNA in the 70S ribosome, positioning it for translation. This is Small ribosomal subunit protein uS3 from Clostridium botulinum (strain Alaska E43 / Type E3).